The following is a 248-amino-acid chain: 4-hydroxy-tetrahydrodipicolinate reductase (248 aa).

NAD(+) is bound by residues Asp32, 74–76 (GTT), and 99–102 (SANF). Catalysis depends on His134, which acts as the Proton donor/acceptor. His135 contacts (S)-2,3,4,5-tetrahydrodipicolinate. Lys138 acts as the Proton donor in catalysis. 144 to 145 (GT) is a (S)-2,3,4,5-tetrahydrodipicolinate binding site.

Belongs to the DapB family.

It localises to the cytoplasm. It carries out the reaction (S)-2,3,4,5-tetrahydrodipicolinate + NAD(+) + H2O = (2S,4S)-4-hydroxy-2,3,4,5-tetrahydrodipicolinate + NADH + H(+). It catalyses the reaction (S)-2,3,4,5-tetrahydrodipicolinate + NADP(+) + H2O = (2S,4S)-4-hydroxy-2,3,4,5-tetrahydrodipicolinate + NADPH + H(+). It participates in amino-acid biosynthesis; L-lysine biosynthesis via DAP pathway; (S)-tetrahydrodipicolinate from L-aspartate: step 4/4. Functionally, catalyzes the conversion of 4-hydroxy-tetrahydrodipicolinate (HTPA) to tetrahydrodipicolinate. The protein is 4-hydroxy-tetrahydrodipicolinate reductase of Chlorobium limicola (strain DSM 245 / NBRC 103803 / 6330).